A 922-amino-acid chain; its full sequence is Hexokinase-3 (922 aa).

A disordered region spans residues 1–23; it reads MATIGPSGLHPGERASVCPHEGV. Hexokinase domains follow at residues 25–469 and 475–911; these read RPSG…MVTA and AAHR…LVTA. Residues 82–218 are hexokinase small subdomain 1; it reads HGTEQGDFLV…TYRIDVVAMV (137 aa). 93 to 100 lines the ATP pocket; that stretch reads ELGATGAS. 93-102 lines the D-glucose 6-phosphate pocket; the sequence is ELGATGASLR. D-glucose is bound by residues Ser166, 183 to 184, and 219 to 220; these read TK and ND. The segment at 219–458 is hexokinase large subdomain 1; sequence NDTVGTMMGC…CDVSFIPSVD (240 aa). D-glucose 6-phosphate-binding residues include Asp220 and Thr243. Residues Asn246, Glu271, and 302–305 each bind D-glucose; that span reads QRFE. 424–426 provides a ligand contact to D-glucose 6-phosphate; the sequence is GGR. Residues 436–437 and 540–545 each bind ATP; these read RI and DLGGTN. The tract at residues 529 to 660 is hexokinase small subdomain 2; the sequence is DGSERGDFLA…AVELNVVAIV (132 aa). 540 to 544 contacts D-glucose 6-phosphate; the sequence is DLGGT. D-glucose is bound by residues 608–609, 625–626, and 661–662; these read SF, TK, and ND. The tract at residues 661–900 is hexokinase large subdomain 2; sequence NDTVGTMMSC…CTVTFLQSED (240 aa). D-glucose 6-phosphate contacts are provided by Asp662 and Thr685. ATP is bound at residue Thr685. D-glucose is bound by residues 687 to 688, Glu713, and Glu747; that span reads TN. ATP is bound by residues 752–753, 789–793, and 868–872; these read GM, TKFLS, and TLYKL. D-glucose 6-phosphate contacts are provided by residues 866–868 and Ser902; that span reads DGT.

It belongs to the hexokinase family.

It catalyses the reaction a D-hexose + ATP = a D-hexose 6-phosphate + ADP + H(+). The enzyme catalyses D-fructose + ATP = D-fructose 6-phosphate + ADP + H(+). It carries out the reaction D-glucose + ATP = D-glucose 6-phosphate + ADP + H(+). The protein operates within carbohydrate metabolism; hexose metabolism. It participates in carbohydrate degradation; glycolysis; D-glyceraldehyde 3-phosphate and glycerone phosphate from D-glucose: step 1/4. With respect to regulation, hexokinase is an allosteric enzyme inhibited by its product D-glucose 6-phosphate. Catalyzes the phosphorylation of hexose, such as D-glucose and D-fructose, to hexose 6-phosphate (D-glucose 6-phosphate and D-fructose 6-phosphate, respectively). Mediates the initial step of glycolysis by catalyzing phosphorylation of D-glucose to D-glucose 6-phosphate. The polypeptide is Hexokinase-3 (Mus musculus (Mouse)).